A 625-amino-acid chain; its full sequence is Ankyrin repeat domain-containing protein oryK (625 aa).

ANK repeat units follow at residues M1 to G27, D31 to P60, N62 to R89, E90 to D119, F162 to C195, Q202 to I232, D500 to F530, S534 to L562, and E568 to I598.

It functions in the pathway secondary metabolite biosynthesis. Ankyrin repeat domain-containing protein; part of the gene cluster that mediates the biosynthesis of oryzines, natural products with an unusual maleidride backbone. The two subunits of the fungal fatty acid synthase oryfasA and oryfasB probably form octenoic acid. This fatty acid is most likely activated by the acyl-CoA ligase oryP to give octenyl-CoA before the citrate synthase-like protein oryE catalyzes condensation with oxaloacetate to form tricarboxylic acid. The next steps of the pathways are conjectural, but a favorite possible route has been proposed, beginning with decarboxylation and concomitant dehydration by the decarboxylase oryM, followed by tautomerization, which may lead to the production of a diene intermediate. Reduction of this diene intermediate could give the known metabolite piliformic acid. On the pathway to oryzine B and oryzine A, however, hydroxylation of the diene by the alpha-ketoglutarate-dependent dioxygenase oryG and lactonisation by the lactonohydrolases oryH or oryL could give oryzine B directly. Finally, enoyl reduction by the dehydrogenase oryD would then convert oryzine B into oryzine A. This chain is Ankyrin repeat domain-containing protein oryK, found in Aspergillus oryzae (strain ATCC 42149 / RIB 40) (Yellow koji mold).